A 56-amino-acid chain; its full sequence is Large ribosomal subunit protein bL32 (56 aa).

A disordered region spans residues 1–26; sequence MAVQQNKKSRSKRGMRRSHDALSTAQ. Positions 7-16 are enriched in basic residues; that stretch reads KKSRSKRGMR.

This sequence belongs to the bacterial ribosomal protein bL32 family.

In Shewanella amazonensis (strain ATCC BAA-1098 / SB2B), this protein is Large ribosomal subunit protein bL32.